A 191-amino-acid chain; its full sequence is Outer membrane lipoprotein DolP (191 aa).

Positions 1–18 are cleaved as a signal peptide; sequence MKAFSPLAVLISALLLQG. Residue cysteine 19 is the site of N-palmitoyl cysteine attachment. A lipid anchor (S-diacylglycerol cysteine) is attached at cysteine 19. BON domains follow at residues 46-115 and 124-191; these read DDGT…RQGQ and NDTW…TYIK.

Belongs to the lipoprotein DolP family.

It is found in the cell outer membrane. Functionally, plays an important role in maintaining outer membrane integrity. Contributes to virulence. In Salmonella typhimurium (strain LT2 / SGSC1412 / ATCC 700720), this protein is Outer membrane lipoprotein DolP.